Consider the following 315-residue polypeptide: 4-hydroxy-3-methylbut-2-enyl diphosphate reductase (315 aa).

Position 12 (Cys12) interacts with [4Fe-4S] cluster. Positions 41 and 74 each coordinate (2E)-4-hydroxy-3-methylbut-2-enyl diphosphate. 2 residues coordinate dimethylallyl diphosphate: His41 and His74. Isopentenyl diphosphate is bound by residues His41 and His74. Cys96 contacts [4Fe-4S] cluster. A (2E)-4-hydroxy-3-methylbut-2-enyl diphosphate-binding site is contributed by His124. His124 contacts dimethylallyl diphosphate. Position 124 (His124) interacts with isopentenyl diphosphate. Glu126 serves as the catalytic Proton donor. Thr168 lines the (2E)-4-hydroxy-3-methylbut-2-enyl diphosphate pocket. [4Fe-4S] cluster is bound at residue Cys198. The (2E)-4-hydroxy-3-methylbut-2-enyl diphosphate site is built by Ser226, Ser227, Asn228, and Ser270. Dimethylallyl diphosphate contacts are provided by Ser226, Ser227, Asn228, and Ser270. Isopentenyl diphosphate-binding residues include Ser226, Ser227, Asn228, and Ser270.

This sequence belongs to the IspH family. Requires [4Fe-4S] cluster as cofactor.

It catalyses the reaction isopentenyl diphosphate + 2 oxidized [2Fe-2S]-[ferredoxin] + H2O = (2E)-4-hydroxy-3-methylbut-2-enyl diphosphate + 2 reduced [2Fe-2S]-[ferredoxin] + 2 H(+). The catalysed reaction is dimethylallyl diphosphate + 2 oxidized [2Fe-2S]-[ferredoxin] + H2O = (2E)-4-hydroxy-3-methylbut-2-enyl diphosphate + 2 reduced [2Fe-2S]-[ferredoxin] + 2 H(+). The protein operates within isoprenoid biosynthesis; dimethylallyl diphosphate biosynthesis; dimethylallyl diphosphate from (2E)-4-hydroxy-3-methylbutenyl diphosphate: step 1/1. Its pathway is isoprenoid biosynthesis; isopentenyl diphosphate biosynthesis via DXP pathway; isopentenyl diphosphate from 1-deoxy-D-xylulose 5-phosphate: step 6/6. Catalyzes the conversion of 1-hydroxy-2-methyl-2-(E)-butenyl 4-diphosphate (HMBPP) into a mixture of isopentenyl diphosphate (IPP) and dimethylallyl diphosphate (DMAPP). Acts in the terminal step of the DOXP/MEP pathway for isoprenoid precursor biosynthesis. This chain is 4-hydroxy-3-methylbut-2-enyl diphosphate reductase, found in Pseudomonas savastanoi pv. phaseolicola (strain 1448A / Race 6) (Pseudomonas syringae pv. phaseolicola (strain 1448A / Race 6)).